Consider the following 433-residue polypeptide: MAGQTIIVSGLNPAAILQSTIGGGASPTAAAAAENGTRKVIPLSRDALQDFMLSIITQKLQDEKQPFYVLDLGEVVSLMDQWKSALPNIRPFYAVKCNPEPSFLSILSAMGSNFDCASRAEIEYVLALGISPDRIVFANPCKPESDIIFAAKVGVNLTTYDSEDEVYKIRKHHPKSELLLRIKPMFDGNARCPMGPKYGALPEEVEPLLRAAQAARLTVSGVSFHIGSGDADSNAYLGAIAAAKEVFETAAKLGMSKMTVLDVGGGFTSGHQFTAAAVAVKSALKQRFDDEPELTIIAEPGRFFAETAFTLATTIIGKRVRGELREYWINDGLYGSMNCVLYDHATVNATPLAVQSNRSNVTCGGSKTFPTTVFGPTCDALDTVLRDYQLPELQVNDWLVFPNMGAYTKAAGSNFNGFNTSAIVTHLAYAYPS.

N6-(pyridoxal phosphate)lysine is present on Lys-96. Pyridoxal 5'-phosphate contacts are provided by residues Ser-228, Gly-266, and 299–302 (EPGR). Position 342-343 (342-343 (YD)) interacts with substrate. Cys-378 serves as the catalytic Proton donor; shared with dimeric partner. Asp-379 provides a ligand contact to substrate. Position 407 (Tyr-407) interacts with pyridoxal 5'-phosphate.

It belongs to the Orn/Lys/Arg decarboxylase class-II family. In terms of assembly, homodimer. Only the dimer is catalytically active, as the active sites are constructed of residues from both monomers. Pyridoxal 5'-phosphate serves as cofactor.

It is found in the plastid. It localises to the chloroplast. The enzyme catalyses L-ornithine + H(+) = putrescine + CO2. It participates in alkaloid biosynthesis; nicotine biosynthesis. The protein operates within amine and polyamine biosynthesis; putrescine biosynthesis via L-ornithine pathway; putrescine from L-ornithine: step 1/1. Its function is as follows. Involved in the biosynthesis of pyridine alkaloid natural products, leading mainly to the production of anabasine, anatabine, nicotine and nornicotine, effective deterrents against herbivores with antiparasitic and pesticide properties (neurotoxins); nornicotine serves as the precursor in the synthesis of the carcinogen compound N'-nitrosonornicotine (NNN). Catalyzes the first and rate-limiting step of polyamine biosynthesis that converts ornithine into putrescine, which is the precursor for the polyamines, spermidine and spermine. Polyamines are essential for cell proliferation and are implicated in cellular processes, ranging from DNA replication to apoptosis. This chain is Ornithine decarboxylase, chloroplastic, found in Nicotiana glauca (Glaucous tobacco).